Reading from the N-terminus, the 74-residue chain is Serine rich endogenous peptide 16 (74 aa).

The N-terminal stretch at 1 to 31 (MATKISHLVSLLLSLLLLLLFISSQVGFTEA) is a signal peptide. The interval 29–74 (TEAKRDERKKMSSPPIPSPLIPSPPIPPPPPRFYVPPSKSRRGKGP) is disordered. The segment covering 42 to 62 (PPIPSPLIPSPPIPPPPPRFY) has biased composition (pro residues). Positions 60–74 (RFYVPPSKSRRGKGP) match the SCOOP motif motif. The SxS motif essential for MIK2 binding signature appears at 66–68 (SKS).

This sequence belongs to the serine rich endogenous peptide (SCOOP) phytocytokine family. As to quaternary structure, interacts with MIK2 (via extracellular leucine-rich repeat domain); this interaction triggers the formation of complex between MIK2 and the BAK1/SERK3 and SERK4 coreceptors, and subsequent BAK1 activation by phosphorylation.

Its subcellular location is the cell membrane. The protein localises to the secreted. The protein resides in the extracellular space. It is found in the apoplast. In terms of biological role, brassicaceae-specific phytocytokine (plant endogenous peptide released into the apoplast) perceived by MIK2 in a BAK1/SERK3 and SERK4 coreceptors-dependent manner, that modulates various physiological and antimicrobial processes including growth prevention and reactive oxygen species (ROS) response regulation. This is Serine rich endogenous peptide 16 from Arabidopsis thaliana (Mouse-ear cress).